Here is a 323-residue protein sequence, read N- to C-terminus: MDRRLDPGLSPYRTFSRAEWAALRRDTPMTLRPDEITRLEGLGVHLSMQEVEEIYLPLSRLLSLYVAATQKLFRAMSYFLDSRDSEANGDGKMPYIIGVAGSVAVGKSTTARVLQALLARWPNTPKVDLVTTDGFLLPNAILEREGLMDKKGFPESYDLPLLLRFLTDIKAGRRPVRAPLYSHFFYDVMPDQYVEIDRPDILIVEGLNVLQTTRPPKDGKAIPFVSDFFDFSVYIDGDEDVIERWYVERFMRLRATAFKDPLSYFHRYSQLTEEQARATALSIWRGINLPNLMDNVLPTRQRADLILRKTGEHEVAEVSLRRL.

An ATP-binding site is contributed by Gly101–Ser108.

The protein belongs to the prokaryotic pantothenate kinase family.

The protein localises to the cytoplasm. The catalysed reaction is (R)-pantothenate + ATP = (R)-4'-phosphopantothenate + ADP + H(+). Its pathway is cofactor biosynthesis; coenzyme A biosynthesis; CoA from (R)-pantothenate: step 1/5. In Xanthobacter autotrophicus (strain ATCC BAA-1158 / Py2), this protein is Pantothenate kinase.